The primary structure comprises 583 residues: Long-chain-fatty-acid--AMP ligase FadD26 (583 aa).

The protein belongs to the ATP-dependent AMP-binding enzyme family.

It catalyses the reaction holo-[(phenol)carboxyphthiodiolenone synthase] + a long-chain fatty acid + ATP = a long-chain fatty acyl-[(phenol)carboxyphthiodiolenone synthase] + AMP + diphosphate. It carries out the reaction eicosanoate + holo-[(phenol)carboxyphthiodiolenone synthase] + ATP = icosanoyl-[(phenol)carboxyphthiodiolenone synthase] + AMP + diphosphate. The catalysed reaction is holo-[(phenol)carboxyphthiodiolenone synthase] + docosanoate + ATP = docosanoyl-[(phenol)carboxyphthiodiolenone synthase] + AMP + diphosphate. It participates in lipid metabolism; fatty acid biosynthesis. Its function is as follows. Catalyzes the activation of long-chain fatty acids as acyl-adenylates (acyl-AMP), which are then transferred to the multifunctional polyketide synthase PpsA for further chain extension. Catalyzes the adenylation of the long-chain fatty acids eicosanoate (C20) or docosanoate (C22), and potentially the very-long-chain fatty acid lignocerate (C24). Involved in the biosynthesis of phthiocerol dimycocerosate (DIM A) and phthiodiolone dimycocerosate (DIM B). The protein is Long-chain-fatty-acid--AMP ligase FadD26 (fadD26) of Mycobacterium tuberculosis (strain CDC 1551 / Oshkosh).